A 363-amino-acid polypeptide reads, in one-letter code: Protein LEG1 homolog (363 aa).

Positions M1–A19 are cleaved as a signal peptide. N79, N261, and N292 each carry an N-linked (GlcNAc...) asparagine glycan.

The protein belongs to the LEG1 family.

The protein resides in the secreted. Its function is as follows. May be involved in early liver development. This Oncorhynchus mykiss (Rainbow trout) protein is Protein LEG1 homolog.